Here is a 464-residue protein sequence, read N- to C-terminus: AAC-rich mRNA clone AAC11 protein (464 aa).

Residues 1–15 (MSTPTLPNLSQLHGI) show a composition bias toward polar residues. Disordered regions lie at residues 1–112 (MSTP…HGTN) and 125–464 (SLPQ…SFFH). Low complexity-rich tracts occupy residues 16–65 (QNQS…QQPQ), 78–88 (NPNGLGLMGHN), and 130–160 (INNN…NNSN). Residues 161-174 (LGINSSPTQSSANS) show a composition bias toward polar residues. 3 consecutive DNA-binding regions (a.T hook) follow at residues 177-189 (KRSR…NPPS), 198-210 (KRKR…MDEE), and 224-236 (NKKR…PKDE). The span at 240-253 (DYNNTSFSDSNTDG) shows a compositional bias: polar residues. The segment at residues 255-267 (PKKRGRPPKAKGD) is a DNA-binding region (a.T hook 4). A compositionally biased stretch (low complexity) spans 276-428 (NTLGNGILNS…NNAGNLGNLG (153 aa)). The segment covering 433–464 (LHSSDPNNPNAQKSFPDSTNTMDFQPNFSFFH) has biased composition (polar residues).

In Dictyostelium discoideum (Social amoeba), this protein is AAC-rich mRNA clone AAC11 protein (AAC11).